Here is a 968-residue protein sequence, read N- to C-terminus: RNA polymerase-associated protein RapA (968 aa).

Residues 164-334 (DVGRRHAPRV…FARLRLLDPN (171 aa)) form the Helicase ATP-binding domain. 177 to 184 (DEVGLGKT) is an ATP binding site. Residues 280 to 283 (DEAH) carry the DEAH box motif. Positions 490 to 685 (RVEWLMGYLT…ALKAQLEQGR (196 aa)) constitute a Helicase C-terminal domain.

It belongs to the SNF2/RAD54 helicase family. RapA subfamily. As to quaternary structure, interacts with the RNAP. Has a higher affinity for the core RNAP than for the holoenzyme. Its ATPase activity is stimulated by binding to RNAP.

In terms of biological role, transcription regulator that activates transcription by stimulating RNA polymerase (RNAP) recycling in case of stress conditions such as supercoiled DNA or high salt concentrations. Probably acts by releasing the RNAP, when it is trapped or immobilized on tightly supercoiled DNA. Does not activate transcription on linear DNA. Probably not involved in DNA repair. This chain is RNA polymerase-associated protein RapA, found in Salmonella paratyphi A (strain ATCC 9150 / SARB42).